Consider the following 267-residue polypeptide: Eukaryotic translation initiation factor 3 subunit J (267 aa).

Disordered stretches follow at residues 1-128 and 220-241; these read MAPS…DIDL and KMREERAADKGNKKTKAAKTKV. Residues 28–46 are compositionally biased toward acidic residues; it reads DEEEEDVLDSWDAAEDSEV. Positions 44–96 form a coiled coil; it reads SEVEREKAAKAAAAAAKAEAEAAAKKKSKAQRIEEHKQERKKQAEANESDEDS. The segment covering 74–88 has biased composition (basic and acidic residues); that stretch reads QRIEEHKQERKKQAE. The span at 90-100 shows a compositional bias: acidic residues; sequence NESDEDSDEDE. 2 stretches are compositionally biased toward basic and acidic residues: residues 108–121 and 220–231; these read RRTEKEGDLKHAQD and KMREERAADKGN.

Belongs to the eIF-3 subunit J family. In terms of assembly, component of the eukaryotic translation initiation factor 3 (eIF-3) complex.

The protein resides in the cytoplasm. In terms of biological role, component of the eukaryotic translation initiation factor 3 (eIF-3) complex, which is involved in protein synthesis of a specialized repertoire of mRNAs and, together with other initiation factors, stimulates binding of mRNA and methionyl-tRNAi to the 40S ribosome. The eIF-3 complex specifically targets and initiates translation of a subset of mRNAs involved in cell proliferation. This Neosartorya fischeri (strain ATCC 1020 / DSM 3700 / CBS 544.65 / FGSC A1164 / JCM 1740 / NRRL 181 / WB 181) (Aspergillus fischerianus) protein is Eukaryotic translation initiation factor 3 subunit J (hcr1).